The chain runs to 171 residues: Dual specificity protein phosphatase OPG106 (171 aa).

Belongs to the protein-tyrosine phosphatase family. Non-receptor class dual specificity subfamily. As to quaternary structure, homodimer.

The protein resides in the virion. Its subcellular location is the host cytoplasm. It catalyses the reaction O-phospho-L-tyrosyl-[protein] + H2O = L-tyrosyl-[protein] + phosphate. It carries out the reaction O-phospho-L-seryl-[protein] + H2O = L-seryl-[protein] + phosphate. Serine/tyrosine phosphatase which down-regulates cellular antiviral response by dephosphorylating activated host STAT1 and blocking interferon (IFN)-stimulated innate immune responses. Dephosphorylates the OPG144 protein. The sequence is that of Dual specificity protein phosphatase OPG106 (OPG106) from Monkeypox virus.